Here is a 285-residue protein sequence, read N- to C-terminus: Probable endonuclease 4 (285 aa).

Residues H69, H109, E145, D179, H182, H216, D229, H231, and E261 each contribute to the Zn(2+) site.

It belongs to the AP endonuclease 2 family. Requires Zn(2+) as cofactor.

The enzyme catalyses Endonucleolytic cleavage to 5'-phosphooligonucleotide end-products.. Endonuclease IV plays a role in DNA repair. It cleaves phosphodiester bonds at apurinic or apyrimidinic (AP) sites, generating a 3'-hydroxyl group and a 5'-terminal sugar phosphate. The chain is Probable endonuclease 4 from Shigella boydii serotype 4 (strain Sb227).